Here is a 517-residue protein sequence, read N- to C-terminus: Maturase K (517 aa).

This sequence belongs to the intron maturase 2 family. MatK subfamily.

The protein resides in the plastid. It localises to the chloroplast. Functionally, usually encoded in the trnK tRNA gene intron. Probably assists in splicing its own and other chloroplast group II introns. The sequence is that of Maturase K from Dracula chimaera.